The chain runs to 408 residues: UDP-N-acetylglucosamine--dolichyl-phosphate N-acetylglucosaminephosphotransferase (408 aa).

At 1–10 (MWAFPELPMP) the chain is on the lumenal side. A helical transmembrane segment spans residues 11–38 (LLVNLIGSLMGFVATVTLIPAFRGHFIA). At 39 to 58 (ARLCGQDLNKSSREQIPESQ) the chain is on the cytoplasmic side. UDP-N-acetyl-alpha-D-glucosamine is bound by residues 44–46 (QDL) and glutamate 56. Residues 59–78 (GVISGAVFLIILFCFIPFPF) traverse the membrane as a helical segment. At 79–91 (LNCFVEQQCKAFP) the chain is on the lumenal side. The chain crosses the membrane as a helical span at residues 92-118 (HHEFVALIGALLAICCMIFLGFADDVL). The Cytoplasmic segment spans residues 119–121 (NLR). The chain crosses the membrane as a helical span at residues 122-143 (WRHKLLLPTAASLPLLMVYFTN). Lysine 125 is a binding site for dolichyl phosphate. Residues 144-166 (FGNTTIVVPKPLRPILGLHLDLG) are Lumenal-facing. Asparagine 146 carries N-linked (GlcNAc...) asparagine glycosylation. Residues 167–186 (ILYYVYMGLLAVFCTNAINI) traverse the membrane as a helical segment. 178-186 (VFCTNAINI) is a dolichyl phosphate binding site. Mg(2+) is bound at residue asparagine 185. Topologically, residues 187-192 (LAGING) are cytoplasmic. Asparagine 191 contacts UDP-N-acetyl-alpha-D-glucosamine. Residues 193–213 (LEAGQSLVISASIIVFNLVEL) form a helical membrane-spanning segment. Residues 214 to 218 (DGDYR) are Lumenal-facing. The helical transmembrane segment at 219-242 (DDHIFSLYFMIPFFFTTLGLLYHN) threads the bilayer. Residues 243–250 (WYPSRVFV) lie on the Cytoplasmic side of the membrane. Residues 251 to 269 (GDTFCYFAGMTFAVVGILG) form a helical membrane-spanning segment. Aspartate 252 lines the Mg(2+) pocket. At 270–271 (HF) the chain is on the lumenal side. Residues 272-293 (SKTMLLFFMPQVFNFLYSLPQL) traverse the membrane as a helical segment. Residues 294–375 (LHIIPCPRHR…LLLKVFGPMH (82 aa)) lie on the Cytoplasmic side of the membrane. 301–303 (RHR) is a binding site for UDP-N-acetyl-alpha-D-glucosamine. Residues 376–400 (ERNLTLLLLLLQVVGSAVTFSIRYQ) traverse the membrane as a helical segment. At 401–408 (LVRLFYDV) the chain is on the lumenal side.

The protein belongs to the glycosyltransferase 4 family. In terms of assembly, homodimer. Mg(2+) is required as a cofactor.

The protein localises to the endoplasmic reticulum membrane. It catalyses the reaction a di-trans,poly-cis-dolichyl phosphate + UDP-N-acetyl-alpha-D-glucosamine = an N-acetyl-alpha-D-glucosaminyl-diphospho-di-trans,poly-cis-dolichol + UMP. Its pathway is protein modification; protein glycosylation. Inhibited by natural nucleoside antibiotic tunicamycin, which acts as a structural analog and competitor of UDP-GlcNAc. Activated by Man-P-Dol. Activated by manganese. Inhibited by diumycin. In terms of biological role, UDP-N-acetylglucosamine--dolichyl-phosphate N-acetylglucosaminephosphotransferase that operates in the biosynthetic pathway of dolichol-linked oligosaccharides, the glycan precursors employed in protein asparagine (N)-glycosylation. The assembly of dolichol-linked oligosaccharides begins on the cytosolic side of the endoplasmic reticulum membrane and finishes in its lumen. The sequential addition of sugars to dolichol pyrophosphate produces dolichol-linked oligosaccharides containing fourteen sugars, including two GlcNAcs, nine mannoses and three glucoses. Once assembled, the oligosaccharide is transferred from the lipid to nascent proteins by oligosaccharyltransferases. Catalyzes the initial step of dolichol-linked oligosaccharide biosynthesis, transfering GlcNAc-1-P from cytosolic UDP-GlcNAc onto the carrier lipid dolichyl phosphate (P-dolichol), yielding GlcNAc-P-P-dolichol embedded in the cytoplasmic leaflet of the endoplasmic reticulum membrane. The polypeptide is UDP-N-acetylglucosamine--dolichyl-phosphate N-acetylglucosaminephosphotransferase (Bos taurus (Bovine)).